A 260-amino-acid chain; its full sequence is Late transcription factor 1 (260 aa).

This sequence belongs to the chordopoxvirinae VLTF-1 family. As to quaternary structure, interacts with the late transcription factors VLTF-2 and VLTF-3. Interacts with the late transcription elongation factor VLTF-4. Interacts with itself.

Functionally, associates with RNA polymerase to initiate transcription from late gene promoters. The protein is Late transcription factor 1 (OPG093) of Homo sapiens (Human).